A 455-amino-acid chain; its full sequence is Adhesin YadA (455 aa).

Residues 1–25 (MTKDFKISVSAALISALFSSPYAFA) form the signal peptide. The interval 26–363 (DDYDGIPNLT…KKAIRESNQY (338 aa)) is surface exposed passenger domain. Positions 209–243 (VNVAQLKKEIEKTQENTNKRSAELLANANAYADNK) form a coiled coil. Residues 364 to 402 (TDHKFRQLDNRLDKLDTRVDKGLASSAALNSLFQPYGVG) are outer membrane translocation of the passenger domain. Transmembrane regions (beta stranded) follow at residues 402–412 (GKVNFTAGVGG), 416–427 (SQALAIGSGYRV), 434–440 (KAGVAYA), and 444–455 (DVMYNASFNIEW). Residues 403-455 (KVNFTAGVGGYRSSQALAIGSGYRVNENVALKAGVAYAGSSDVMYNASFNIEW) form a translocator domain region.

Belongs to the autotransporter-2 (AT-2) (TC 1.B.40) family. In terms of assembly, homotrimer; in gels migrates as monomers, dimers and homotrimers. Does not form trimers with distantly related EibA from E.coli; coexpression was lethal and one of the genes is eliminated in vivo. If the full translocator domain (368-455) is exchanged with that of EibA ('299-392'), will form heterotrimers with EibA and vice-versa.

The protein localises to the cell surface. Its subcellular location is the cell outer membrane. Its function is as follows. Collagen-binding outer membrane protein forming a fibrillar matrix on the bacterial cell surface. Promotes initial attachment and invasion of eukaryotic cells. Also protects the bacteria by being responsible for agglutination, serum resistance, complement inactivation and phagocytosis resistance. This Yersinia enterocolitica protein is Adhesin YadA (yadA).